The chain runs to 754 residues: 5-methyltetrahydropteroyltriglutamate--homocysteine methyltransferase (754 aa).

5-methyltetrahydropteroyltri-L-glutamate-binding positions include 15-18 (RELK) and Lys114. L-homocysteine contacts are provided by residues 430-432 (IGS) and Glu483. Residues 430–432 (IGS) and Glu483 contribute to the L-methionine site. Residues 514–515 (RC) and Trp560 contribute to the 5-methyltetrahydropteroyltri-L-glutamate site. Residue Asp598 coordinates L-homocysteine. Asp598 is a binding site for L-methionine. Glu604 is a 5-methyltetrahydropteroyltri-L-glutamate binding site. Zn(2+)-binding residues include His641, Cys643, and Glu665. His694 acts as the Proton donor in catalysis. Residue Cys726 participates in Zn(2+) binding.

It belongs to the vitamin-B12 independent methionine synthase family. Zn(2+) serves as cofactor.

The catalysed reaction is 5-methyltetrahydropteroyltri-L-glutamate + L-homocysteine = tetrahydropteroyltri-L-glutamate + L-methionine. The protein operates within amino-acid biosynthesis; L-methionine biosynthesis via de novo pathway; L-methionine from L-homocysteine (MetE route): step 1/1. Catalyzes the transfer of a methyl group from 5-methyltetrahydrofolate to homocysteine resulting in methionine formation. The chain is 5-methyltetrahydropteroyltriglutamate--homocysteine methyltransferase from Campylobacter jejuni subsp. doylei (strain ATCC BAA-1458 / RM4099 / 269.97).